Consider the following 331-residue polypeptide: MLTLTAGKKAAMDRLSTQEGIISALAIDQRGALKKMIKALDVEPTDAQIETFKELVSKELTPYASAILLDPEYGLPAAKARDTEAGLLLAYEKTGYDATTPGRLPDLLADWSVLRLKEEGADAIKFLLYYDVDEDPEINHQKHVFIERLGSECAEEDLPFYLELVSYDAQIADATSLEYAKVKPHKVNEMMKEFSKPQYKVDVLKVEVPVNMNFVEGFAPAETAYTKEEAANYFLEQSQATDLPFIFLSAGVSTELFQETLRFAKEAGSTFNGVLCGRATWKNGVKPFVEAGETAACDWLKTEGRENIESLNEVIAATASSWHAKVQVNEG.

Belongs to the aldolase LacD family.

It carries out the reaction D-tagatofuranose 1,6-bisphosphate = D-glyceraldehyde 3-phosphate + dihydroxyacetone phosphate. It participates in carbohydrate metabolism; D-tagatose 6-phosphate degradation; D-glyceraldehyde 3-phosphate and glycerone phosphate from D-tagatose 6-phosphate: step 2/2. This Enterococcus faecalis (strain ATCC 700802 / V583) protein is Tagatose 1,6-diphosphate aldolase 2 (lacD2).